A 366-amino-acid polypeptide reads, in one-letter code: Class I histocompatibility antigen, Gogo-C*0202 alpha chain (366 aa).

The N-terminal stretch at 1-24 is a signal peptide; that stretch reads MRVMAPRTLILLLSGALALTETWA. Residues 25–114 are alpha-1; that stretch reads GSHSMRYFYT…LRGYYNQSED (90 aa). Residues 25 to 308 are Extracellular-facing; it reads GSHSMRYFYT…EPSSQPTIPI (284 aa). The N-linked (GlcNAc...) asparagine glycan is linked to Asn110. The alpha-2 stretch occupies residues 115–206; sequence GSHTLQSMYG…ENGKETLQRA (92 aa). 2 disulfide bridges follow: Cys125-Cys188 and Cys227-Cys283. An alpha-3 region spans residues 207 to 298; sequence EPPKTHVTHH…GLPEPLTLRW (92 aa). Residues 209–297 enclose the Ig-like C1-type domain; sequence PKTHVTHHPL…EGLPEPLTLR (89 aa). A connecting peptide region spans residues 299-308; that stretch reads EPSSQPTIPI. The chain crosses the membrane as a helical span at residues 309–332; sequence VGIVVGLAVLVVLAVLGAVVTAMM. At 333–366 the chain is on the cytoplasmic side; that stretch reads CRRKSSGGKGGSCSQAACSNSAQGSDESLITCKA.

This sequence belongs to the MHC class I family. In terms of assembly, heterodimer of an alpha chain and a beta chain (beta-2-microglobulin).

Its subcellular location is the membrane. In terms of biological role, involved in the presentation of foreign antigens to the immune system. This chain is Class I histocompatibility antigen, Gogo-C*0202 alpha chain, found in Gorilla gorilla gorilla (Western lowland gorilla).